The chain runs to 541 residues: uncharacterized protein (541 aa).

5 helical membrane-spanning segments follow: residues 10–32 (LNNQ…KINI), 39–57 (SSAI…YTLP), 62–84 (TLGL…FFSL), 91–113 (LSLG…TYLF), and 146–168 (APAA…IQII). 2 RCK C-terminal domains span residues 183 to 260 (LNKE…DDLE) and 268 to 352 (TPVD…IFGN). The next 6 membrane-spanning stretches (helical) occupy residues 357-375 (SYNF…GFIL), 385-407 (SGIF…SNIY), 428-447 (GLVL…ILAT), 452-474 (GLQL…VFIC), 481-500 (PFLS…PGLA), and 515-537 (YATV…IFIV).

It belongs to the AAE transporter (TC 2.A.81) family.

It is found in the cell membrane. This is an uncharacterized protein from Desulfotalea psychrophila (strain LSv54 / DSM 12343).